We begin with the raw amino-acid sequence, 316 residues long: DNA-directed RNA polymerase III subunit RPC6 (316 aa).

A2 is subject to N-acetylalanine. Residues K5 and K7 each participate in a glycyl lysine isopeptide (Lys-Gly) (interchain with G-Cter in SUMO2) cross-link. [4Fe-4S] cluster contacts are provided by C287, C290, C296, and C307.

The protein belongs to the eukaryotic RPC34/RPC39 RNA polymerase subunit family. As to quaternary structure, component of the RNA polymerase III complex consisting of 17 subunits: a ten-subunit horseshoe-shaped catalytic core composed of POLR3A/RPC1, POLR3B/RPC2, POLR1C/RPAC1, POLR1D/RPAC2, POLR3K/RPC10, POLR2E/RPABC1, POLR2F/RPABC2, POLR2H/RPABC3, POLR2K/RPABC4 and POLR2L/RPABC5; a mobile stalk composed of two subunits POLR3H/RPC8 and CRCP/RPC9, protruding from the core and functioning primarily in transcription initiation; and additional subunits homologous to general transcription factors of the RNA polymerase II machinery, POLR3C/RPC3-POLR3F/RPC6-POLR3G/RPC7 heterotrimer required for transcription initiation and POLR3D/RPC4-POLR3E/RPC5 heterodimer involved in both transcription initiation and termination. Directly interacts with POLR3C. Interacts with TBP and TFIIIB90 and GTF3C4. Interacts with MAF1. As part of the RNA polymerase III complex, interacts with PKP2.

It localises to the nucleus. Functionally, DNA-dependent RNA polymerase catalyzes the transcription of DNA into RNA using the four ribonucleoside triphosphates as substrates. Specific peripheric component of RNA polymerase III (Pol III) which synthesizes small non-coding RNAs including 5S rRNA, snRNAs, tRNAs and miRNAs from at least 500 distinct genomic loci. Part of POLR3C/RPC3-POLR3F/RPC6-POLR3G/RPC7 heterotrimer that coordinates the dynamics of Pol III stalk and clamp modules during the transition from apo to elongation state. Pol III plays a key role in sensing and limiting infection by intracellular bacteria and DNA viruses, including varicella zoster virus. Acts as a nuclear and cytosolic DNA sensor detecting AT-rich DNA, involved in innate immune response. Can sense non-self dsDNA that serves as template for transcription into dsRNA. The non-self RNA polymerase III transcripts, such as Epstein-Barr virus-encoded RNAs (EBERs) induce type I interferon and NF-kappa-B through the RIG-I pathway. Preferentially binds double-stranded DNA (dsDNA). The chain is DNA-directed RNA polymerase III subunit RPC6 (POLR3F) from Bos taurus (Bovine).